The sequence spans 563 residues: Glutamate--tRNA ligase (563 aa).

Positions 61–94 (PEEQQKEVESLGGLEQHTKKEEKPKGLPELKNTE) are disordered. Basic and acidic residues predominate over residues 76–94 (QHTKKEEKPKGLPELKNTE). The 'HIGH' region motif lies at 104–114 (PNPSGPLHIGH).

Belongs to the class-I aminoacyl-tRNA synthetase family. Glutamate--tRNA ligase type 2 subfamily.

The protein localises to the cytoplasm. The catalysed reaction is tRNA(Glu) + L-glutamate + ATP = L-glutamyl-tRNA(Glu) + AMP + diphosphate. In terms of biological role, catalyzes the attachment of glutamate to tRNA(Glu) in a two-step reaction: glutamate is first activated by ATP to form Glu-AMP and then transferred to the acceptor end of tRNA(Glu). The chain is Glutamate--tRNA ligase from Methanosphaera stadtmanae (strain ATCC 43021 / DSM 3091 / JCM 11832 / MCB-3).